Consider the following 634-residue polypeptide: DNA-directed RNA polymerase subunit gamma (634 aa).

Zn(2+) contacts are provided by cysteine 74, cysteine 76, cysteine 89, and cysteine 92. Positions 471, 473, and 475 each coordinate Mg(2+).

Belongs to the RNA polymerase beta' chain family. RpoC1 subfamily. In terms of assembly, in cyanobacteria the RNAP catalytic core is composed of 2 alpha, 1 beta, 1 beta', 1 gamma and 1 omega subunit. When a sigma factor is associated with the core the holoenzyme is formed, which can initiate transcription. Requires Mg(2+) as cofactor. The cofactor is Zn(2+).

It carries out the reaction RNA(n) + a ribonucleoside 5'-triphosphate = RNA(n+1) + diphosphate. DNA-dependent RNA polymerase catalyzes the transcription of DNA into RNA using the four ribonucleoside triphosphates as substrates. The polypeptide is DNA-directed RNA polymerase subunit gamma (Prochlorococcus marinus (strain MIT 9312)).